The sequence spans 104 residues: ATP-dependent Clp protease adapter protein ClpS (104 aa).

It belongs to the ClpS family. In terms of assembly, binds to the N-terminal domain of the chaperone ClpA.

Functionally, involved in the modulation of the specificity of the ClpAP-mediated ATP-dependent protein degradation. This Paraburkholderia xenovorans (strain LB400) protein is ATP-dependent Clp protease adapter protein ClpS.